A 473-amino-acid polypeptide reads, in one-letter code: Cell division protein FtsP (473 aa).

A signal peptide (tat-type signal) is located at residues 1-27; the sequence is MSFSRRQFLQASGLAVCLGSLSSSVRA.

The protein belongs to the FtsP family. Post-translationally, predicted to be exported by the Tat system. The position of the signal peptide cleavage has not been experimentally proven.

The protein resides in the periplasm. Cell division protein that is required for growth during stress conditions. May be involved in protecting or stabilizing the divisomal assembly under conditions of stress. The polypeptide is Cell division protein FtsP (Proteus mirabilis (strain HI4320)).